A 271-amino-acid chain; its full sequence is Troponin T, fast skeletal muscle (271 aa).

Positions 1–21 (MSDEEVEHVEEEYEEEEEAQE) are enriched in acidic residues. The disordered stretch occupies residues 1-74 (MSDEEVEHVE…EKVDFDDIQK (74 aa)). S2 is subject to N-acetylserine. S2 carries the phosphoserine modification. Composition is skewed to basic and acidic residues over residues 31 to 53 (PEVH…EKPR) and 62 to 74 (PEGE…DIQK). Residue S90 is modified to Phosphoserine. Residues 113–155 (RAERAEQQRIRAEKERERQNRLAEEKARREEEDAKRRAEDDLK) show a composition bias toward basic and acidic residues. Positions 113 to 194 (RAERAEQQRI…REMKKKVLAE (82 aa)) are disordered. S161, S168, and S169 each carry phosphoserine. Positions 183-194 (TAREMKKKVLAE) are enriched in basic and acidic residues. The residue at position 205 (S205) is a Phosphoserine. At Y221 the chain carries Phosphotyrosine. The tract at residues 248 to 271 (IDQAQKHSKKAGTAPKGKVGGRWK) is disordered.

This sequence belongs to the troponin T family.

Troponin T is the tropomyosin-binding subunit of troponin, the thin filament regulatory complex which confers calcium-sensitivity to striated muscle actomyosin ATPase activity. The protein is Troponin T, fast skeletal muscle (Tnnt3) of Bos taurus (Bovine).